Consider the following 352-residue polypeptide: MIKISIDAMGGDFGPEVVIPGAAKALERHPDIRFIFFGLPAQVEPVLARYPKLKAASEFRASQVAISMDDKPSQALRAGRGKSSMWQAIEAVKTGDAQACISAGNTGALMAMSKFCLRMMSDVERPAIAGIWPTLRGESIVLDVGATIGADARQLVDYAVMGAGMARALFEVRKPTVGLLNVGTEEVKGLDEIKEAGQILRDTPLDGLAYSGFVEGNDIGKGTVDVVVTEGFTGNIALKAAEGTARQMGELLRQAMRRTLLAKIGYVFAKGAFDRLREKMDPNKVNGGVFLGLSGIVIKSHGSANAEGFCSAVEVGYDMVRNRLLEKIEADLAHFHHSHPHVSNDGGEAAKA.

It belongs to the PlsX family. In terms of assembly, homodimer. Probably interacts with PlsY.

The protein localises to the cytoplasm. The enzyme catalyses a fatty acyl-[ACP] + phosphate = an acyl phosphate + holo-[ACP]. The protein operates within lipid metabolism; phospholipid metabolism. Functionally, catalyzes the reversible formation of acyl-phosphate (acyl-PO(4)) from acyl-[acyl-carrier-protein] (acyl-ACP). This enzyme utilizes acyl-ACP as fatty acyl donor, but not acyl-CoA. The chain is Phosphate acyltransferase from Brucella anthropi (strain ATCC 49188 / DSM 6882 / CCUG 24695 / JCM 21032 / LMG 3331 / NBRC 15819 / NCTC 12168 / Alc 37) (Ochrobactrum anthropi).